Consider the following 487-residue polypeptide: MSLPNSSCLLEDKMCEGNKTTMASPQLMPLVVVLSTICLVTVGLNLLVLYAVRSERKLHTVGNLYIVSLSVADLIVGAVVMPMNILYLLMSKWSLGRPLCLFWLSMDYVASTASIFSVFILCIDRYRSVQQPLRYLKYRTKTRASATILGAWFLSFLWVIPILGWNHFMQQTSVRREDKCETDFYDVTWFKVMTAIINFYLPTLLMLWFYAKIYKAVRQHCQHRELINRSLPSFSEIKLRPENPKGDAKKPGKESPWEVLKRKPKDAGGGSVLKSPSQTPKEMKSPVVFSQEDDREVDKLYCFPLDIVHMQAAAEGSSRDYVAVNRSHGQLKTDEQGLNTHGASEISEDQMLGDSQSFSRTDSDTTTETAPGKGKLRSGSNTGLDYIKFTWKRLRSHSRQYVSGLHMNRERKAAKQLGFIMAAFILCWIPYFIFFMVIAFCKNCCNEHLHMFTIWLGYINSTLNPLIYPLCNENFKKTFKRILHIRS.

At 1 to 29 (MSLPNSSCLLEDKMCEGNKTTMASPQLMP) the chain is on the extracellular side. Asn5 and Asn18 each carry an N-linked (GlcNAc...) asparagine glycan. Residues 30-50 (LVVVLSTICLVTVGLNLLVLY) traverse the membrane as a helical segment. Over 51 to 64 (AVRSERKLHTVGNL) the chain is Cytoplasmic. The helical transmembrane segment at 65 to 89 (YIVSLSVADLIVGAVVMPMNILYLL) threads the bilayer. The Extracellular portion of the chain corresponds to 90 to 97 (MSKWSLGR). A helical membrane pass occupies residues 98 to 123 (PLCLFWLSMDYVASTASIFSVFILCI). Cys100 and Cys180 are disulfide-bonded. 2 residues coordinate histamine: Asp107 and Thr112. The interval 107 to 112 (DYVAST) is important for agonist binding. Topologically, residues 124–144 (DRYRSVQQPLRYLKYRTKTRA) are cytoplasmic. Phosphothreonine is present on residues Thr140 and Thr142. Residues 145–164 (SATILGAWFLSFLWVIPILG) traverse the membrane as a helical segment. Residues 165-188 (WNHFMQQTSVRREDKCETDFYDVT) are Extracellular-facing. A helical membrane pass occupies residues 189-211 (WFKVMTAIINFYLPTLLMLWFYA). A histamine-binding site is contributed by Asn198. Over 212–416 (KIYKAVRQHC…MNRERKAAKQ (205 aa)) the chain is Cytoplasmic. Ser230 carries the phosphoserine modification. The segment covering 238–261 (KLRPENPKGDAKKPGKESPWEVLK) has biased composition (basic and acidic residues). Positions 238 to 291 (KLRPENPKGDAKKPGKESPWEVLKRKPKDAGGGSVLKSPSQTPKEMKSPVVFSQ) are disordered. Thr279 bears the Phosphothreonine mark. Residues Ser344 and Ser347 each carry the phosphoserine modification. A disordered region spans residues 345–379 (EISEDQMLGDSQSFSRTDSDTTTETAPGKGKLRSG). Residues 353–369 (GDSQSFSRTDSDTTTET) show a composition bias toward polar residues. Residues Ser380, Ser396, and Ser398 each carry the phosphoserine modification. The helical transmembrane segment at 417–440 (LGFIMAAFILCWIPYFIFFMVIAF) threads the bilayer. Residues 424 to 428 (FILCW) are important for agonist binding. Tyr431 is a histamine binding site. Cys441 and Cys444 are disulfide-bonded. Residues 441-446 (CKNCCN) lie on the Extracellular side of the membrane. Residues 447–469 (EHLHMFTIWLGYINSTLNPLIYP) form a helical membrane-spanning segment. Residues 470-487 (LCNENFKKTFKRILHIRS) are Cytoplasmic-facing.

Belongs to the G-protein coupled receptor 1 family. Phosphorylation at sites in the second and third cytoplasmic loops independently contribute to agonist-induced receptor down-regulation.

It is found in the cell membrane. Its function is as follows. G-protein-coupled receptor for histamine, a biogenic amine that functions as an immune modulator and a neurotransmitter. Through the H1 receptor, histamine mediates the contraction of smooth muscles and increases capillary permeability due to contraction of terminal venules. Also mediates neurotransmission in the central nervous system and thereby regulates circadian rhythms, emotional and locomotor activities as well as cognitive functions. The polypeptide is Histamine H1 receptor (Homo sapiens (Human)).